A 235-amino-acid polypeptide reads, in one-letter code: Ubiquinone biosynthesis O-methyltransferase (235 aa).

S-adenosyl-L-methionine contacts are provided by Arg39, Gly59, Asp80, and Met124.

The protein belongs to the methyltransferase superfamily. UbiG/COQ3 family.

The catalysed reaction is a 3-demethylubiquinol + S-adenosyl-L-methionine = a ubiquinol + S-adenosyl-L-homocysteine + H(+). It carries out the reaction a 3-(all-trans-polyprenyl)benzene-1,2-diol + S-adenosyl-L-methionine = a 2-methoxy-6-(all-trans-polyprenyl)phenol + S-adenosyl-L-homocysteine + H(+). It participates in cofactor biosynthesis; ubiquinone biosynthesis. Functionally, O-methyltransferase that catalyzes the 2 O-methylation steps in the ubiquinone biosynthetic pathway. In Photobacterium profundum (strain SS9), this protein is Ubiquinone biosynthesis O-methyltransferase.